Consider the following 170-residue polypeptide: Shikimate kinase (170 aa).

15 to 20 (GAGKTT) contacts ATP. Threonine 19 provides a ligand contact to Mg(2+). Positions 37, 61, and 83 each coordinate substrate. Position 121 (arginine 121) interacts with ATP. Arginine 140 provides a ligand contact to substrate.

The protein belongs to the shikimate kinase family. Monomer. Mg(2+) serves as cofactor.

It localises to the cytoplasm. The catalysed reaction is shikimate + ATP = 3-phosphoshikimate + ADP + H(+). The protein operates within metabolic intermediate biosynthesis; chorismate biosynthesis; chorismate from D-erythrose 4-phosphate and phosphoenolpyruvate: step 5/7. Catalyzes the specific phosphorylation of the 3-hydroxyl group of shikimic acid using ATP as a cosubstrate. The protein is Shikimate kinase of Neisseria gonorrhoeae (strain ATCC 700825 / FA 1090).